We begin with the raw amino-acid sequence, 155 residues long: Interleukin-2 (155 aa).

A signal peptide spans 1 to 20 (MYKIQLLSCIALTLALVANG). An O-linked (GalNAc...) threonine glycan is attached at T23. C79 and C127 are oxidised to a cystine.

It belongs to the IL-2 family.

It localises to the secreted. Cytokine produced by activated CD4-positive helper T-cells and to a lesser extend activated CD8-positive T-cells and natural killer (NK) cells that plays pivotal roles in the immune response and tolerance. Binds to a receptor complex composed of either the high-affinity trimeric IL-2R (IL2RA/CD25, IL2RB/CD122 and IL2RG/CD132) or the low-affinity dimeric IL-2R (IL2RB and IL2RG). Interaction with the receptor leads to oligomerization and conformation changes in the IL-2R subunits resulting in downstream signaling starting with phosphorylation of JAK1 and JAK3. In turn, JAK1 and JAK3 phosphorylate the receptor to form a docking site leading to the phosphorylation of several substrates including STAT5. This process leads to activation of several pathways including STAT, phosphoinositide-3-kinase/PI3K and mitogen-activated protein kinase/MAPK pathways. Functions as a T-cell growth factor and can increase NK-cell cytolytic activity as well. Promotes strong proliferation of activated B-cells and subsequently immunoglobulin production. Plays a pivotal role in regulating the adaptive immune system by controlling the survival and proliferation of regulatory T-cells, which are required for the maintenance of immune tolerance. Moreover, participates in the differentiation and homeostasis of effector T-cell subsets, including Th1, Th2, Th17 as well as memory CD8-positive T-cells. This chain is Interleukin-2 (IL2), found in Boselaphus tragocamelus (Nilgai).